The sequence spans 237 residues: Ribonuclease PH (237 aa).

Phosphate contacts are provided by residues arginine 86 and 124-126; that span reads GTR.

The protein belongs to the RNase PH family. As to quaternary structure, homohexameric ring arranged as a trimer of dimers.

It catalyses the reaction tRNA(n+1) + phosphate = tRNA(n) + a ribonucleoside 5'-diphosphate. In terms of biological role, phosphorolytic 3'-5' exoribonuclease that plays an important role in tRNA 3'-end maturation. Removes nucleotide residues following the 3'-CCA terminus of tRNAs; can also add nucleotides to the ends of RNA molecules by using nucleoside diphosphates as substrates, but this may not be physiologically important. Probably plays a role in initiation of 16S rRNA degradation (leading to ribosome degradation) during starvation. This Shewanella oneidensis (strain ATCC 700550 / JCM 31522 / CIP 106686 / LMG 19005 / NCIMB 14063 / MR-1) protein is Ribonuclease PH.